Reading from the N-terminus, the 414-residue chain is Apolipoprotein N-acyltransferase (414 aa).

6 consecutive transmembrane segments (helical) span residues 19–39 (GIALFGAILFSLFIYLHHFGI), 40–60 (TSPLLYSLLALLALAFYLKLP), 63–83 (SGFAFGFWVGIAWFYWMALSF), 91–111 (LIPFILLGIGGVYGVLFSMAL), 121–141 (LLLWLLSHVQPFGFDWMVPEV), and 153–173 (LSFGLILLSLSLFWLLPQRWL). The 213-residue stretch at 202 to 414 (IETHIPQEIR…NRSPSGIIAP (213 aa)) folds into the CN hydrolase domain. Glutamate 243 serves as the catalytic Proton acceptor. Lysine 298 is a catalytic residue. The active-site Nucleophile is cysteine 351.

Belongs to the CN hydrolase family. Apolipoprotein N-acyltransferase subfamily.

The protein resides in the cell inner membrane. The enzyme catalyses N-terminal S-1,2-diacyl-sn-glyceryl-L-cysteinyl-[lipoprotein] + a glycerophospholipid = N-acyl-S-1,2-diacyl-sn-glyceryl-L-cysteinyl-[lipoprotein] + a 2-acyl-sn-glycero-3-phospholipid + H(+). It participates in protein modification; lipoprotein biosynthesis (N-acyl transfer). Functionally, catalyzes the phospholipid dependent N-acylation of the N-terminal cysteine of apolipoprotein, the last step in lipoprotein maturation. This Wolinella succinogenes (strain ATCC 29543 / DSM 1740 / CCUG 13145 / JCM 31913 / LMG 7466 / NCTC 11488 / FDC 602W) (Vibrio succinogenes) protein is Apolipoprotein N-acyltransferase.